The following is a 402-amino-acid chain: Speedy protein E21 (402 aa).

Residues 1–90 (MDRTETRFRK…EPEKELAPEP (90 aa)) are disordered. Over residues 16–39 (GKITTSRQLHPQNEQSPQRSTSGY) the composition is skewed to polar residues. Over residues 76–90 (DESEEEPEKELAPEP) the composition is skewed to acidic residues.

The protein belongs to the Speedy/Ringo family.

This is Speedy protein E21 from Homo sapiens (Human).